The chain runs to 908 residues: Mechanosensitive ion channel protein 8 (908 aa).

Over residues 1–25 (MDFRNSFKSHSSYKQIRSPGDQSEP) the composition is skewed to polar residues. 4 disordered regions span residues 1–88 (MDFR…HTAV), 148–172 (DQEN…SFDA), 190–221 (VAGS…LQEE), and 242–265 (VKTR…WRSG). Basic and acidic residues predominate over residues 31 to 70 (PILHDHHPDHSGMVVDDQKPDSTRSSLDDGRNAPVERDAS). Composition is skewed to polar residues over residues 75–85 (QDNTTGTSTDH) and 156–171 (HQTM…TSFD). Residues 196–206 (SSSSHSSSSSS) show a composition bias toward low complexity. Residues 207-218 (ATMRTNQDQPQL) are compositionally biased toward polar residues. Positions 247–256 (RLQDPPREEE) are enriched in basic and acidic residues. The next 6 membrane-spanning stretches (helical) occupy residues 298–318 (AITL…ACSL), 341–361 (LVLI…VFFI), 381–401 (AVQN…LFDK), 411–431 (FLPY…LWLI), 673–693 (MINI…LEIA), and 709–729 (AFIF…LFIV).

Belongs to the MscS (TC 1.A.23) family. Expressed in tricellular and mature pollen, and in germinating tube. Not detected in leaves or roots.

Its subcellular location is the cell membrane. It is found in the endomembrane system. Not regulated by MgCl(2), ruthenium red or tetramethylammonium-Cl. In terms of biological role, mechanosensitive channel that opens in response to stretch forces in the membrane lipid bilayer. Exhibits a 6.3-fold preference for chloride over sodium. Regulates osmotic forces during pollen hydration and germination. The polypeptide is Mechanosensitive ion channel protein 8 (Arabidopsis thaliana (Mouse-ear cress)).